The sequence spans 700 residues: Stonustoxin subunit beta (700 aa).

Residues Pro-2 to Ser-264 are structural MACPF/CDC pore-forming domain. The segment at Thr-265–Val-384 is structural FAT domain. The segment at Ile-385–Lys-514 is thioredoxin (THX) domain. Residues Tyr-506–Leu-700 enclose the B30.2/SPRY domain.

This sequence belongs to the SNTX/VTX toxin family. As to quaternary structure, heterodimer of alpha and beta subunits; non-covalently linked. In terms of processing, intrachain disulfide bonds may be present in the heterodimer. Post-translationally, not glycosylated. As to expression, expressed by the venom gland.

The protein localises to the secreted. Functionally, this lethal (towards mammals) heterodimer induces hemolytic activities due to its ability to form pores in the cell membrane. The pore may be composed of 10 SNTX-alpha/beta heterodimers. The toxin elicits potent hypotension which is endothelium-dependent and appears to be mediated by the nitric oxide pathway and activation of potassium channels. In addition, it displays edema-inducing activities, increases vascular permeability. It also shows myotoxic activities and interferes irreversibly with neuromuscular function. It also induces irreversible platelet aggregation in rabbit or rat but not in human or mouse whole blood. In addition, it has been observed to increase spontaneous quantal acetylcholine release from isolated frog cutaneous pectoris motor endings. In Synanceia horrida (Estuarine stonefish), this protein is Stonustoxin subunit beta.